The primary structure comprises 206 residues: Dephospho-CoA kinase (206 aa).

One can recognise a DPCK domain in the interval 4–204 (IVGLTGGIGS…QFYLQQAENK (201 aa)). 12 to 17 (GSGKTT) lines the ATP pocket.

This sequence belongs to the CoaE family.

It is found in the cytoplasm. The enzyme catalyses 3'-dephospho-CoA + ATP = ADP + CoA + H(+). It functions in the pathway cofactor biosynthesis; coenzyme A biosynthesis; CoA from (R)-pantothenate: step 5/5. Its function is as follows. Catalyzes the phosphorylation of the 3'-hydroxyl group of dephosphocoenzyme A to form coenzyme A. The polypeptide is Dephospho-CoA kinase (Haemophilus influenzae (strain 86-028NP)).